The primary structure comprises 97 residues: uncharacterized protein (97 aa).

This is an uncharacterized protein from Archaeoglobus fulgidus (strain ATCC 49558 / DSM 4304 / JCM 9628 / NBRC 100126 / VC-16).